Reading from the N-terminus, the 158-residue chain is MSIEGVLEKGFVTTTLDTVINYTRTGSLWPMTFGLACCAVEMMHAGAARYDLDRFGIVFRPSPRQSDVMIVAGTLVNKMAPALRKVYDQMAEPRWVISMGSCANGGGYYHYSYAVVRGCDRIVPVDVYVPGCPPTAEALLYGIIQLQNKIKRTNTIAR.

[4Fe-4S] cluster-binding residues include Cys37, Cys38, Cys102, and Cys132.

The protein belongs to the complex I 20 kDa subunit family. As to quaternary structure, NDH-1 is composed of 14 different subunits. Subunits NuoB, C, D, E, F, and G constitute the peripheral sector of the complex. The cofactor is [4Fe-4S] cluster.

It localises to the cell inner membrane. It carries out the reaction a quinone + NADH + 5 H(+)(in) = a quinol + NAD(+) + 4 H(+)(out). Its function is as follows. NDH-1 shuttles electrons from NADH, via FMN and iron-sulfur (Fe-S) centers, to quinones in the respiratory chain. Couples the redox reaction to proton translocation (for every two electrons transferred, four hydrogen ions are translocated across the cytoplasmic membrane), and thus conserves the redox energy in a proton gradient. This is NADH-quinone oxidoreductase subunit B from Methylobacillus flagellatus (strain ATCC 51484 / DSM 6875 / VKM B-1610 / KT).